Reading from the N-terminus, the 360-residue chain is Putative F-box protein At5g55150 (360 aa).

An F-box domain is found at 6–54 (SSWSEFLPELLNTVFHNLNDARDILNCATVCSSWKDSSSAVYYSRTFSP).

The protein is Putative F-box protein At5g55150 of Arabidopsis thaliana (Mouse-ear cress).